Here is a 221-residue protein sequence, read N- to C-terminus: Large ribosomal subunit protein uL3 (221 aa).

Belongs to the universal ribosomal protein uL3 family. In terms of assembly, part of the 50S ribosomal subunit. Forms a cluster with proteins L14 and L19.

Functionally, one of the primary rRNA binding proteins, it binds directly near the 3'-end of the 23S rRNA, where it nucleates assembly of the 50S subunit. The protein is Large ribosomal subunit protein uL3 of Chlamydia abortus (strain DSM 27085 / S26/3) (Chlamydophila abortus).